A 66-amino-acid chain; its full sequence is Small ribosomal subunit protein bS21 (66 aa).

Belongs to the bacterial ribosomal protein bS21 family.

The protein is Small ribosomal subunit protein bS21 of Rickettsia akari (strain Hartford).